We begin with the raw amino-acid sequence, 188 residues long: Ribosome-recycling factor (188 aa).

Belongs to the RRF family.

The protein localises to the cytoplasm. In terms of biological role, responsible for the release of ribosomes from messenger RNA at the termination of protein biosynthesis. May increase the efficiency of translation by recycling ribosomes from one round of translation to another. The polypeptide is Ribosome-recycling factor (Granulibacter bethesdensis (strain ATCC BAA-1260 / CGDNIH1)).